The chain runs to 278 residues: Sulfur carrier protein FdhD (278 aa).

The Cysteine persulfide intermediate role is filled by cysteine 121. 260–265 contributes to the Mo-bis(molybdopterin guanine dinucleotide) binding site; sequence FCKPGR.

The protein belongs to the FdhD family.

The protein localises to the cytoplasm. Functionally, required for formate dehydrogenase (FDH) activity. Acts as a sulfur carrier protein that transfers sulfur from IscS to the molybdenum cofactor prior to its insertion into FDH. The protein is Sulfur carrier protein FdhD of Salmonella heidelberg (strain SL476).